A 534-amino-acid polypeptide reads, in one-letter code: Probable protein kinase UbiB (534 aa).

A helical membrane pass occupies residues 23-43 (DLLFDLPLPWFLLALRYVLPW). The 368-residue stretch at 125-492 (RFDVEPLASA…WKKRKDDWFL (368 aa)) folds into the Protein kinase domain. ATP-binding positions include 131–139 (LASASVAQV) and K153. D288 serves as the catalytic Proton acceptor. 2 consecutive transmembrane segments (helical) span residues 490-510 (WFLRLLGSAHLAGGTILAAGG) and 512-532 (LHELGHWPAGIMVAVGLYLVV).

The protein belongs to the ABC1 family. UbiB subfamily.

It is found in the cell inner membrane. Its pathway is cofactor biosynthesis; ubiquinone biosynthesis [regulation]. In terms of biological role, is probably a protein kinase regulator of UbiI activity which is involved in aerobic coenzyme Q (ubiquinone) biosynthesis. This is Probable protein kinase UbiB from Pseudomonas fluorescens (strain Pf0-1).